We begin with the raw amino-acid sequence, 516 residues long: MKVVITVVTCLFLLSVMQLSFFNIFNYQLLDATTNGSKDSRKSKDKLLGGLLTADFDEDSCLSRYESSLYRKPSPYKPSRYLVSKLRSYEMLHKRCGPGTEAYKKATEILGHDDENHSTKSVGECRYIVWIAVYGLGNRILTLASLFLYALLTDRIMLVDQRTDISDLFCEPFPGTSWLLPLDFPLTDQLDSFNKESPRCYGTMLKNHAINSTTTESIIPSYLCLYLIHDYDDYDKMFFCESDQILIRQVPWLVFNSNLYFIPSLWLIPSFQSELSKLFPQKETVFHHLARYLFHPTNQVWGMITRSYNGYLSRADERLGIQVRVFSKPAGYFQHVMDQILACTQREKLLPEVFVLETQVTNTSRSSKLKAVLVTSLYPEYSEILRQMYWKGPSSTGEIIQIYQPSQEIYQQTDNKLHDQKALAEIYLLSLTDYIVTSDSSTFGYVAQGLGGLKPWILYKPKNHTAPEPPCVRAVSMEPCFLRAPLYGCQAKKVNITPFVMYCEDRITGLKLVDSN.

The helical; Signal-anchor for type II membrane protein transmembrane segment at 5 to 25 (ITVVTCLFLLSVMQLSFFNIF) threads the bilayer. Residues 26–516 (NYQLLDATTN…ITGLKLVDSN (491 aa)) are Lumenal-facing. N-linked (GlcNAc...) asparagine glycans are attached at residues Asn-35, Asn-116, Asn-211, Asn-362, and Asn-463.

This sequence belongs to the glycosyltransferase 37 family. As to expression, expressed in leaves and stems.

The protein resides in the golgi apparatus. Its subcellular location is the golgi stack membrane. Its pathway is protein modification; protein glycosylation. May be involved in cell wall biosynthesis. May act as a fucosyltransferase. The chain is Probable fucosyltransferase 8 (FUT8) from Arabidopsis thaliana (Mouse-ear cress).